We begin with the raw amino-acid sequence, 534 residues long: Melanopsin-B (534 aa).

Residues 1–32 (MDLGKTVEYGTHRQDAIAQIDVPDQVLYTIGS) lie on the Extracellular side of the membrane. A helical membrane pass occupies residues 33-53 (FILIIGSVGIIGNMLVLYAFY). At 54–64 (RNKKLRTAPNY) the chain is on the cytoplasmic side. Residues 65–85 (FIINLAISDFLMSATQAPVCF) traverse the membrane as a helical segment. At 86–102 (LSSLHREWILGDIGCNV) the chain is on the extracellular side. Cys100 and Cys178 form a disulfide bridge. Residues 103-123 (YAFCGALFGITSMMTLLAISI) form a helical membrane-spanning segment. At 124–146 (NRYIVITKPLQSIQWSSKKRTSQ) the chain is on the cytoplasmic side. A helical membrane pass occupies residues 147–167 (IIVLVWMYSLMWSLAPLLGWS). At 168–198 (SYVPEGLRISCTWDYVTSTMSNRSYTMMLCC) the chain is on the extracellular side. Residue Asn189 is glycosylated (N-linked (GlcNAc...) asparagine). The helical transmembrane segment at 199 to 219 (CVFFIPLIVISHCYLFMFLAI) threads the bilayer. Residues 220–250 (RSTGRNVQKLGSYGRQSFLSQSMKNEWKMAK) lie on the Cytoplasmic side of the membrane. A helical membrane pass occupies residues 251-271 (IAFVIIIVFVLSWSPYACVTL). The Extracellular portion of the chain corresponds to 272–286 (IAWAGHGKSLTPYSK). A helical membrane pass occupies residues 287 to 307 (TVPAVIAKASAIYNPIIYGII). N6-(retinylidene)lysine is present on Lys294. Residues 308–534 (HPKYRETIHK…LYEVVERFLS (227 aa)) lie on the Cytoplasmic side of the membrane. A disordered region spans residues 478-501 (SNISETKEEHDNNSEEKSKRTEEE). A compositionally biased stretch (basic and acidic residues) spans 482–499 (ETKEEHDNNSEEKSKRTE).

It belongs to the G-protein coupled receptor 1 family. Opsin subfamily. As to expression, highest level in the iris, high level in the inner nuclear layer, possibly in horizontal cells, and lowest level in retinal pigment epithelium. Expressed in melanophore cells of the skin.

The protein localises to the cell membrane. Its function is as follows. Photoreceptor implicated in non-image-forming responses to light. May be able to isomerize covalently bound all-trans retinal back to 11-cis retinal. The sequence is that of Melanopsin-B from Xenopus laevis (African clawed frog).